The sequence spans 441 residues: Velvet complex subunit B (441 aa).

The region spanning 1-173 (MSTLGQGDFE…SDQGVRLRLR (173 aa)) is the Velvet domain. Disordered stretches follow at residues 200 to 220 (GYLPHDANHDLSPNGHSPHHL), 234 to 295 (RSRS…ETDT), and 341 to 396 (MPSP…PSYA). 2 stretches are compositionally biased toward low complexity: residues 272–283 (DGASPDSPHPSS) and 361–375 (PAGAPGSASSAFSPG).

This sequence belongs to the velvet family. VelB subfamily. Component of the heterotrimeric velvet complex composed of laeA, veA and velB; VeA acting as a bridging protein between laeA and velB.

Its subcellular location is the nucleus. It localises to the cytoplasm. In terms of biological role, component of the velvet transcription factor complex that controls sexual/asexual developmental ratio in response to light, promoting sexual development in the darkness while stimulating asexual sporulation under illumination. The velvet complex acts as a global regulator for secondary metabolite gene expression and is required for the production of chaetoglobosin A. The chain is Velvet complex subunit B from Chaetomium globosum (strain ATCC 6205 / CBS 148.51 / DSM 1962 / NBRC 6347 / NRRL 1970) (Soil fungus).